The primary structure comprises 330 residues: Probable integrase/recombinase protein MJ0367 (330 aa).

Positions 22 to 112 (IEETDKIKEY…LLKVFYRVLR (91 aa)) constitute a Core-binding (CB) domain. The Tyr recombinase domain occupies 136–325 (QHYDAVDAEM…RAESLEFIKK (190 aa)). Residues Arg177, Lys202, His275, Arg278, and His301 contribute to the active site. Catalysis depends on Tyr310, which acts as the O-(3'-phospho-DNA)-tyrosine intermediate.

It belongs to the 'phage' integrase family.

This Methanocaldococcus jannaschii (strain ATCC 43067 / DSM 2661 / JAL-1 / JCM 10045 / NBRC 100440) (Methanococcus jannaschii) protein is Probable integrase/recombinase protein MJ0367.